A 1024-amino-acid chain; its full sequence is Myosin phosphatase Rho-interacting protein (1024 aa).

Positions 1–382 (MSAAKENPCR…DRRSTESSMT (382 aa)) are interaction with F-actin. The PH 1 domain maps to 43–150 (KPIYGGWLLL…WLEMLMVYPR (108 aa)). The disordered stretch occupies residues 152–262 (NKQNQKKKRK…GDRVDGGRKV (111 aa)). Low complexity predominate over residues 179 to 190 (SSSGGSSGSSSS). 5 positions are modified to phosphoserine: Ser193, Ser219, Ser221, Ser225, and Ser227. A compositionally biased stretch (low complexity) spans 221 to 233 (SPAQSPSQSQPPA). Over residues 240–262 (PGLESKEDESTISGDRVDGGRKV) the composition is skewed to basic and acidic residues. 4 positions are modified to phosphoserine: Ser266, Ser270, Ser289, and Ser292. 2 disordered regions span residues 274–301 (AKQD…SRRS) and 328–379 (PSSD…STES). Thr295 bears the Phosphothreonine mark. Residues 333–349 (RQGRSERRAIPRKRDFA) show a composition bias toward basic and acidic residues. A Phosphoserine modification is found at Ser364. One can recognise a PH 2 domain in the interval 386–482 (LNFKKGWLTK…WIQTIMKHVL (97 aa)). The tract at residues 486–583 (APDVTSSLPE…AEPGELERER (98 aa)) is disordered. A compositionally biased stretch (polar residues) spans 488-508 (DVTSSLPEGKNKSTSFETCSR). Ser492 is subject to Phosphoserine. Over residues 522 to 545 (PEQKKSRARERRREGRSKTFDWAE) the composition is skewed to basic and acidic residues. An interaction with RHOA region spans residues 545–823 (EFRPIQQALA…SVQRELEVLS (279 aa)). Ser617 is modified (phosphoserine). At Thr645 the chain carries Phosphothreonine. Residues 672-976 (HELTSLLEKE…AATEALGEKS (305 aa)) are a coiled coil. Position 799 is a phosphoserine (Ser799). The tract at residues 823 to 878 (SEQYSQKCLENAHLAQALEAERQALRQCQRENQELNAHNQELNNRLAAEITRLRTL) is interaction with PPP1R12A. Residues 972 to 995 (LGEKSPEGTTVSGYDIMKSKSNPD) are disordered. Residues Ser976, Gly979, Ser992, Ser1013, and Ser1015 each carry the phosphoserine modification.

In terms of assembly, binds RHOA, PPP1R12A/MBS and PPP1R12C/MBS85 through adjacent coiled coil domains. Interacts with MYZAP. Binds F-actin through its N-terminus. In terms of tissue distribution, expressed in Kidney, Brain, Heart and Lung.

The protein resides in the cytoplasm. It is found in the cytoskeleton. Its function is as follows. Targets myosin phosphatase to the actin cytoskeleton. Required for the regulation of the actin cytoskeleton by RhoA and ROCK1. Depletion leads to an increased number of stress fibers in smooth muscle cells through stabilization of actin fibers by phosphorylated myosin. Overexpression of MRIP as well as its F-actin-binding region leads to disassembly of stress fibers in neuronal cells. The protein is Myosin phosphatase Rho-interacting protein (Mprip) of Mus musculus (Mouse).